We begin with the raw amino-acid sequence, 154 residues long: Small ribosomal subunit protein uS13m (154 aa).

The transit peptide at 1 to 30 (MLGLRRSATTLFDISQSLLRNVTFHGLRVQ) directs the protein to the mitochondrion. A disordered region spans residues 121–154 (RHGLPCRGQRTSTNARTKKGKAVAIAGKKKAPRK). A compositionally biased stretch (basic residues) spans 136–154 (RTKKGKAVAIAGKKKAPRK).

This sequence belongs to the universal ribosomal protein uS13 family. In terms of assembly, part of the small ribosomal subunit.

It localises to the mitochondrion. Its function is as follows. Located at the top of the head of the small subunit, it contacts several helices of the 18S rRNA. This chain is Small ribosomal subunit protein uS13m (RPS13), found in Arabidopsis thaliana (Mouse-ear cress).